Here is a 107-residue protein sequence, read N- to C-terminus: Glutaredoxin 4 (107 aa).

One can recognise a Glutaredoxin domain in the interval 4–106 (LDKIKKQISE…TLLAEVAAKH (103 aa)). Position 21 (Lys-21) interacts with glutathione. [2Fe-2S] cluster is bound at residue Cys-29. Residues Arg-58, Phe-70, and 83–84 (CD) contribute to the glutathione site.

The protein belongs to the glutaredoxin family. Monothiol subfamily. As to quaternary structure, homodimer.

The protein resides in the cytoplasm. In terms of biological role, monothiol glutaredoxin involved in the biogenesis of iron-sulfur clusters. This chain is Glutaredoxin 4 (grxD), found in Haemophilus influenzae (strain ATCC 51907 / DSM 11121 / KW20 / Rd).